The primary structure comprises 397 residues: G2/mitotic-specific cyclin-B1 (397 aa).

Residues 1 to 17 (MALRVTRNTRLASSENQ) show a composition bias toward polar residues. The interval 1 to 30 (MALRVTRNTRLASSENQGALPGKAAVANKP) is disordered.

This sequence belongs to the cyclin family. Cyclin AB subfamily. As to quaternary structure, interacts with the CDK1 protein kinase to form a serine/threonine kinase holoenzyme complex also known as maturation promoting factor (MPF). The cyclin subunit imparts substrate specificity to the complex.

Functionally, essential for the control of the cell cycle at the G2/M (mitosis) transition. The chain is G2/mitotic-specific cyclin-B1 (ccnb1) from Carassius auratus (Goldfish).